The sequence spans 196 residues: Peptidyl-tRNA hydrolase (196 aa).

Y18 contacts tRNA. The active-site Proton acceptor is the H23. F69, N71, and N117 together coordinate tRNA.

This sequence belongs to the PTH family. In terms of assembly, monomer.

It is found in the cytoplasm. It carries out the reaction an N-acyl-L-alpha-aminoacyl-tRNA + H2O = an N-acyl-L-amino acid + a tRNA + H(+). Hydrolyzes ribosome-free peptidyl-tRNAs (with 1 or more amino acids incorporated), which drop off the ribosome during protein synthesis, or as a result of ribosome stalling. In terms of biological role, catalyzes the release of premature peptidyl moieties from peptidyl-tRNA molecules trapped in stalled 50S ribosomal subunits, and thus maintains levels of free tRNAs and 50S ribosomes. This Aliivibrio salmonicida (strain LFI1238) (Vibrio salmonicida (strain LFI1238)) protein is Peptidyl-tRNA hydrolase.